Reading from the N-terminus, the 430-residue chain is Adenylosuccinate synthetase (430 aa).

GTP contacts are provided by residues 12-18 (GDEGKGK) and 40-42 (GHT). Asp13 (proton acceptor) is an active-site residue. Asp13 and Gly40 together coordinate Mg(2+). IMP contacts are provided by residues 13–16 (DEGK), 38–41 (NAGH), Thr130, Arg144, Gln224, Thr239, and Arg303. His41 (proton donor) is an active-site residue. Residue 299–305 (TVTGRKR) participates in substrate binding. GTP is bound by residues Arg305, 331–333 (KLD), and 413–415 (STS).

This sequence belongs to the adenylosuccinate synthetase family. As to quaternary structure, homodimer. The cofactor is Mg(2+).

It is found in the cytoplasm. It catalyses the reaction IMP + L-aspartate + GTP = N(6)-(1,2-dicarboxyethyl)-AMP + GDP + phosphate + 2 H(+). It participates in purine metabolism; AMP biosynthesis via de novo pathway; AMP from IMP: step 1/2. Plays an important role in the de novo pathway of purine nucleotide biosynthesis. Catalyzes the first committed step in the biosynthesis of AMP from IMP. The chain is Adenylosuccinate synthetase from Cereibacter sphaeroides (strain ATCC 17029 / ATH 2.4.9) (Rhodobacter sphaeroides).